We begin with the raw amino-acid sequence, 337 residues long: UDP-N-acetylenolpyruvoylglucosamine reductase (337 aa).

In terms of domain architecture, FAD-binding PCMH-type spans 16–187 (ALPGRAARYQ…TSVIFRLAKA (172 aa)). R160 is an active-site residue. Residue S237 is the Proton donor of the active site. Residue E333 is part of the active site.

The cofactor is FAD.

The protein resides in the cytoplasm. It carries out the reaction UDP-N-acetyl-alpha-D-muramate + NADP(+) = UDP-N-acetyl-3-O-(1-carboxyvinyl)-alpha-D-glucosamine + NADPH + H(+). It functions in the pathway cell wall biogenesis; peptidoglycan biosynthesis. In terms of biological role, cell wall formation. In Dechloromonas aromatica (strain RCB), this protein is UDP-N-acetylenolpyruvoylglucosamine reductase.